Consider the following 591-residue polypeptide: Cineole synthase 1, chloroplastic (591 aa).

The N-terminal 44 residues, 1-44 (MSSLIMQVVIPKPAKFFHNNLFSLSSKRHRFSTTTTTRGGRWAR), are a transit peptide targeting the chloroplast. (2E)-geranyl diphosphate contacts are provided by Arg308, Asp345, Asp349, Arg486, and Asp489. Residues Asp345 and Asp349 each coordinate Mg(2+). Positions 345–349 (DDVFD) match the DDXXD motif motif. Residues Asp489, Thr493, and Glu497 each contribute to the Mg(2+) site.

It belongs to the terpene synthase family. Tpsb subfamily. As to quaternary structure, monomer. Mg(2+) is required as a cofactor. The cofactor is Mn(2+).

Its subcellular location is the plastid. The protein resides in the chloroplast. It catalyses the reaction (2E)-geranyl diphosphate + H2O = 1,8-cineole + diphosphate. The catalysed reaction is (2E)-geranyl diphosphate = alpha-pinene + diphosphate. The enzyme catalyses (2E)-geranyl diphosphate = beta-pinene + diphosphate. It carries out the reaction (2E)-geranyl diphosphate + H2O = (S)-alpha-terpineol + diphosphate. It catalyses the reaction (2E)-geranyl diphosphate = beta-myrcene + diphosphate. The catalysed reaction is (2E)-geranyl diphosphate = sabinene + diphosphate. It participates in secondary metabolite biosynthesis; terpenoid biosynthesis. In terms of biological role, monoterpene synthase (TPS) involved in the biosynthesis of monoterpene natural products, components of the chemical defense arsenal. Catalyzes the conversion of (2E)-geranyl diphosphate (GPP) into 1,8-cineole, and, as minor products, alpha-terpineol, beta-pinene, alpha-pinene, sabinene and myrcene. This chain is Cineole synthase 1, chloroplastic, found in Salvia fruticosa (Greek sage).